Consider the following 1519-residue polypeptide: MEPEPVEDCVQSTLAALYPPFEATAPTLLGQVFQVVERTYREDALRYTLDFLVPAKHLLAKVQQEACAQYSGFLFFHEGWPLCLHEQVVVQLAALPWQLLRPGDFYLQVVPSAAQAPRLALKCLAPGGGRVQEVPVPNEACAYLFTPEWLQGINKDRPTGRLSTCLLSAPSGIQRLPWAELICPRFVHKEGLMVGHQPSTLPPELPSGPPGLPSPPLPEEALGTRSPGDGHNAPVEGPEGEYVELLEVTLPVRGSPTDAEGSPGLSRVRTVPTRKGAGGKGRHRRHRAWMHQKGLGPRGQDGARPPGEGSSTGASPESPPGAEAVPEAAVLEVSEPPAEAVGEASGSCPLRPGELRGGGGGGQGAEGPPGTPRRTGKGNRRKKRAAGRGALSRGGDSAPLSPGDKEDASHQEALGNLPSPSEHKLPECHLVKEEYEGSGKPESEPKELKTAGEKEPQLSEACGPTEEGAGERELEGPGLLCMAGHTGPEGPLSDTPTPPLETVQEGKGDNIPEEALAVSVSDHPDVAWDLMASGFLILTGGVDQSGRALLTITPPCPPEEPPPSRDTLNTTLHYLHSLLRPDLQTLGLSVLLDLRQAPPLPPALIPALSQLQDSGDPPLVQRLLILIHDDLPTELCGFQGAEVLSENDLKRVAKPEELQWELGGHRDPSPSHWVEIHQEVVRLCRLCQGVLGSVRQAIEELEGAAEPEEEEAVGMPKPLQKVLADPRLTALQRDGGAILMRLRSTPSSKLEGQGPATLYQEVDEAIHQLVRLSNLHVQQQEQRQCLRRLQQVLQWLSGPGEEQLASFAMPGDTLSALQETELRFRAFSAEVQERLAQAREALALEENATSQKVLDIFEQRLEQVESGLHRALRLQRFFQQAHEWVDEGFARLAGAGPGREAVLAALALRRAPEPSAGTFQEMRALALDLGSPAALREWGRCQARCQELERRIQQHVGEEASPRGYRRRRADGASSGGAQWGPRSPSPSLSSLLLPSSPGPRPAPSHCSLAPCGEDYEEEGPELAPEAEGRPPRAVLIRGLEVTSTEVVDRTCSPREHVLLGRARGPDGPWGVGTPRMERKRSISAQQRLVSELIACEQDYVATLSEPVPPPGPELTPELRGTWAAALSARERLRSFHRTHFLRELQGCATHPLRIGACFLRHGDQFSLYAQYVKHRHKLENGLAALSPLSKGSMEAGPYLPRALQQPLEQLTRYGRLLEELLREAGPELSSECRALGAAVQLLREQEARGRDLLAVEAVRGCEIDLKEQGQLLHRDPFTVICGRKKCLRHVFLFEHLLLFSKLKGPEGGSEMFVYKQAFKTADMGLTENIGDSGLCFELWFRRRRAREAYTLQATSPEIKLKWTSSIAQLLWRQAAHNKELRVQQMVSMGIGNKPFLDIKALGERTLSALLTGRAARTRASVAVSSFEHAGPSLPGLSPGACSLPARVEEEAWDLDVKQISLAPETLDSSGDVSPGPRNSPSLQPPHPGSSTPTLASRGILGLSRQSHARALSDPTTPL.

2 disordered regions span residues 194-237 (VGHQ…PVEG) and 253-503 (RGSP…LETV). Pro residues predominate over residues 200-218 (TLPPELPSGPPGLPSPPLP). At serine 262 the chain carries Phosphoserine. Positions 280–290 (KGRHRRHRAWM) are enriched in basic residues. The span at 314 to 341 (ASPESPPGAEAVPEAAVLEVSEPPAEAV) shows a compositional bias: low complexity. Over residues 355 to 367 (LRGGGGGGQGAEG) the composition is skewed to gly residues. Residue threonine 371 is modified to Phosphothreonine. Basic residues predominate over residues 374–386 (RTGKGNRRKKRAA). The residue at position 419 (serine 419) is a Phosphoserine. A compositionally biased stretch (basic and acidic residues) spans 421–457 (SEHKLPECHLVKEEYEGSGKPESEPKELKTAGEKEPQ). A coiled-coil region spans residues 828 to 871 (SAEVQERLAQAREALALEENATSQKVLDIFEQRLEQVESGLHRA). A phosphoserine mark is found at serine 931 and serine 961. Residues 934 to 961 (ALREWGRCQARCQELERRIQQHVGEEAS) adopt a coiled-coil conformation. A disordered region spans residues 955-1031 (HVGEEASPRG…ELAPEAEGRP (77 aa)). Residues 980–996 (WGPRSPSPSLSSLLLPS) show a composition bias toward low complexity. A Phosphoserine modification is found at serine 1082. Positions 1085 to 1253 (AQQRLVSELI…REQEARGRDL (169 aa)) constitute a DH domain. The PH domain maps to 1265 to 1372 (DLKEQGQLLH…WTSSIAQLLW (108 aa)). A phosphoserine mark is found at serine 1433, serine 1438, and serine 1474. Residues 1466 to 1519 (TLDSSGDVSPGPRNSPSLQPPHPGSSTPTLASRGILGLSRQSHARALSDPTTPL) form a disordered region. Positions 1467–1482 (LDSSGDVSPGPRNSPS) are enriched in polar residues. Phosphothreonine is present on threonine 1492.

Expressed at higher level in the central nervous system and skeletal muscle and greater abundance in fetal than adult brain (at protein level).

It localises to the cytoplasm. In terms of biological role, may act as a guanine nucleotide exchange factor (GEF). This Homo sapiens (Human) protein is Rho guanine nucleotide exchange factor 40 (ARHGEF40).